We begin with the raw amino-acid sequence, 361 residues long: Holliday junction branch migration complex subunit RuvB (361 aa).

Polar residues-rich tracts occupy residues 1 to 15 (MAIKRSGNNNLSPNV) and 28 to 40 (ERSTSPELEQQEA). Residues 1–41 (MAIKRSGNNNLSPNVKSDLLSPEVIPQERSTSPELEQQEAS) are disordered. The segment at 13–203 (PNVKSDLLSP…FGLIQRLRFY (191 aa)) is large ATPase domain (RuvB-L). Residues L42, R43, G84, K87, T88, T89, 150–152 (EDF), R193, Y203, and R240 contribute to the ATP site. A Mg(2+)-binding site is contributed by T88. Residues 204–274 (EVDELQQIIL…LASEALDLYQ (71 aa)) form a small ATPAse domain (RuvB-S) region. Positions 277–361 (KRGLDWTDRL…PTPLLPWKES (85 aa)) are head domain (RuvB-H). Residues R332 and R337 each contribute to the DNA site.

Belongs to the RuvB family. As to quaternary structure, homohexamer. Forms an RuvA(8)-RuvB(12)-Holliday junction (HJ) complex. HJ DNA is sandwiched between 2 RuvA tetramers; dsDNA enters through RuvA and exits via RuvB. An RuvB hexamer assembles on each DNA strand where it exits the tetramer. Each RuvB hexamer is contacted by two RuvA subunits (via domain III) on 2 adjacent RuvB subunits; this complex drives branch migration. In the full resolvosome a probable DNA-RuvA(4)-RuvB(12)-RuvC(2) complex forms which resolves the HJ.

The protein localises to the cytoplasm. It catalyses the reaction ATP + H2O = ADP + phosphate + H(+). In terms of biological role, the RuvA-RuvB-RuvC complex processes Holliday junction (HJ) DNA during genetic recombination and DNA repair, while the RuvA-RuvB complex plays an important role in the rescue of blocked DNA replication forks via replication fork reversal (RFR). RuvA specifically binds to HJ cruciform DNA, conferring on it an open structure. The RuvB hexamer acts as an ATP-dependent pump, pulling dsDNA into and through the RuvAB complex. RuvB forms 2 homohexamers on either side of HJ DNA bound by 1 or 2 RuvA tetramers; 4 subunits per hexamer contact DNA at a time. Coordinated motions by a converter formed by DNA-disengaged RuvB subunits stimulates ATP hydrolysis and nucleotide exchange. Immobilization of the converter enables RuvB to convert the ATP-contained energy into a lever motion, pulling 2 nucleotides of DNA out of the RuvA tetramer per ATP hydrolyzed, thus driving DNA branch migration. The RuvB motors rotate together with the DNA substrate, which together with the progressing nucleotide cycle form the mechanistic basis for DNA recombination by continuous HJ branch migration. Branch migration allows RuvC to scan DNA until it finds its consensus sequence, where it cleaves and resolves cruciform DNA. Its function is as follows. Participates in UV-tolerance of Synechocystis PCC 6803. This chain is Holliday junction branch migration complex subunit RuvB, found in Synechocystis sp. (strain ATCC 27184 / PCC 6803 / Kazusa).